The sequence spans 294 residues: 4-hydroxy-tetrahydrodipicolinate synthase (294 aa).

Thr-47 is a pyruvate binding site. Tyr-135 serves as the catalytic Proton donor/acceptor. Lys-163 functions as the Schiff-base intermediate with substrate in the catalytic mechanism. Pyruvate is bound at residue Ile-206.

Belongs to the DapA family. In terms of assembly, homodimer.

The protein resides in the cytoplasm. It catalyses the reaction L-aspartate 4-semialdehyde + pyruvate = (2S,4S)-4-hydroxy-2,3,4,5-tetrahydrodipicolinate + H2O + H(+). It functions in the pathway amino-acid biosynthesis; L-lysine biosynthesis via DAP pathway; (S)-tetrahydrodipicolinate from L-aspartate: step 3/4. Functionally, catalyzes the condensation of (S)-aspartate-beta-semialdehyde [(S)-ASA] and pyruvate to 4-hydroxy-tetrahydrodipicolinate (HTPA). This chain is 4-hydroxy-tetrahydrodipicolinate synthase, found in Staphylococcus epidermidis (strain ATCC 35984 / DSM 28319 / BCRC 17069 / CCUG 31568 / BM 3577 / RP62A).